Consider the following 438-residue polypeptide: DNA primase small subunit (438 aa).

Catalysis depends on residues glutamate 63, aspartate 127, and aspartate 129. The Zinc knuckle motif motif lies at cysteine 139–cysteine 149.

Belongs to the eukaryotic-type primase small subunit family. In terms of assembly, heterodimer of a catalytic subunit Prim1 and a regulatory subunit Prim2, also known as the DNA primase complex. Component of the alpha DNA polymerase complex (also known as the alpha DNA polymerase-primase complex) consisting of four subunits: the catalytic subunit PolA1, the regulatory subunit PolA2, and the primase complex subunits Prim1 and Prim2 respectively. PolA1 associates with the DNA primase complex before association with PolA2. Mg(2+) is required as a cofactor. The cofactor is Mn(2+). In terms of tissue distribution, expressed in embryos (at protein level).

Its activity is regulated as follows. The presence of the regulatory subunit Prim2 accelerates the kinetics of initiation and primer extension. Its function is as follows. Catalytic subunit of the DNA primase complex and component of the DNA polymerase alpha complex (also known as the alpha DNA polymerase-primase complex) which play an essential role in the initiation of DNA synthesis. During the S phase of the cell cycle, the DNA polymerase alpha complex (composed of a catalytic subunit PolA1, an accessory subunit PolA2 and two primase subunits, the catalytic subunit Prim1 and the regulatory subunit Prim2) is recruited to DNA at the replicative forks. The primase subunit of the polymerase alpha complex initiates DNA synthesis by oligomerising short RNA primers on both leading and lagging strands. These primers are initially extended by the polymerase alpha catalytic subunit and subsequently transferred to polymerase delta and polymerase epsilon for processive synthesis on the lagging and leading strand, respectively. In the primase complex, both subunits are necessary for the initial di-nucleotide formation, but the extension of the primer depends only on the catalytic subunit. Can add both ribo- and deoxynucleotides during elongation of the primers. Binds single stranded DNA. This is DNA primase small subunit from Drosophila melanogaster (Fruit fly).